The following is a 307-amino-acid chain: MWNKEWAAKIPFMTYCEACRPHHWLKNGLLFVPVLICGRAEDLLQAPLWLAFMTFCSVASGIYVLNDLMDRAHDRRHPSKRHRPFASRKLSGLTGVWMCLVLIALGGVCAINCGERLFAITASYVALSVIYVGKVRGEYVLDLFVLSALYTTRILAGATAANIPVPASFLAFSAMAFVSLASIKRLNELTQLRRDGAPDLYGRGYELSDHSIVALICVSAGYAAVVFLELFVQMSSVAQGPAPIFVSNAMCVVVAYWISRAVVQAHRGDMRSDTLCYAVTDGSSLVCILGLALGLVFLMYCRSQSIG.

8 consecutive transmembrane segments (helical) span residues 46-66 (APLWLAFMTFCSVASGIYVLN), 91-111 (SGLTGVWMCLVLIALGGVCAI), 117-137 (LFAITASYVALSVIYVGKVRG), 140-160 (VLDLFVLSALYTTRILAGATA), 163-183 (IPVPASFLAFSAMAFVSLASI), 212-232 (IVALICVSAGYAAVVFLELFV), 238-258 (AQGPAPIFVSNAMCVVVAYWI), and 279-299 (VTDGSSLVCILGLALGLVFLM).

The protein resides in the cell membrane. The polypeptide is Nodulation protein NoeC (noeC) (Azorhizobium caulinodans (strain ATCC 43989 / DSM 5975 / JCM 20966 / LMG 6465 / NBRC 14845 / NCIMB 13405 / ORS 571)).